Here is a 136-residue protein sequence, read N- to C-terminus: Cystatin-2 (136 aa).

Positions 1 to 24 (MALLRGFLVCSLLLLSCICKEALG) are cleaved as a signal peptide. Positions 29–124 (GGLENASPEE…CTFEVYNIPW (96 aa)) constitute a Cystatin domain. A Secondary area of contact motif is present at residues 73–77 (QIVSG). 2 cysteine pairs are disulfide-bonded: C91–C101 and C115–C135.

Belongs to the cystatin family. As to expression, expressed by the venom gland.

The protein localises to the secreted. In terms of biological role, inhibits various C1 cysteine proteases including cathepsin L, papain and cathepsin B. This protein has no toxic activity and its function in the venom is unknown. It may play a role as housekeeping or regulatory protein. The chain is Cystatin-2 from Crotalus adamanteus (Eastern diamondback rattlesnake).